The chain runs to 235 residues: Small ribosomal subunit protein uS2 (235 aa).

It belongs to the universal ribosomal protein uS2 family.

The sequence is that of Small ribosomal subunit protein uS2 from Geobacillus thermodenitrificans (strain NG80-2).